Here is a 1158-residue protein sequence, read N- to C-terminus: ATP-dependent helicase/deoxyribonuclease subunit B (1158 aa).

8–15 contributes to the ATP binding site; that stretch reads GRAGTGKS. [4Fe-4S] cluster is bound by residues Cys-791, Cys-1112, Cys-1115, and Cys-1121.

Belongs to the helicase family. AddB/RexB type 1 subfamily. As to quaternary structure, heterodimer of AddA and AddB. Requires Mg(2+) as cofactor. It depends on [4Fe-4S] cluster as a cofactor.

In terms of biological role, the heterodimer acts as both an ATP-dependent DNA helicase and an ATP-dependent, dual-direction single-stranded exonuclease. Recognizes the chi site generating a DNA molecule suitable for the initiation of homologous recombination. The AddB subunit has 5' -&gt; 3' nuclease activity but not helicase activity. This is ATP-dependent helicase/deoxyribonuclease subunit B from Clostridium perfringens (strain ATCC 13124 / DSM 756 / JCM 1290 / NCIMB 6125 / NCTC 8237 / Type A).